The primary structure comprises 216 residues: Uracil phosphoribosyltransferase (216 aa).

GTP is bound by residues Arg30, Arg39, 73–76 (ASKI), and Lys75. Arg83 contributes to the 5-phospho-alpha-D-ribose 1-diphosphate binding site. Lys100 contacts GTP. Residue Arg108 participates in 5-phospho-alpha-D-ribose 1-diphosphate binding. Arg129 is a GTP binding site. 5-phospho-alpha-D-ribose 1-diphosphate contacts are provided by residues Asp135 and 135-143 (DPMLATGGT). Tyr199 is a D-ribose 5-phosphate binding site. Uracil-binding positions include Ile200 and 205–207 (GDF). Asp206 is a 5-phospho-alpha-D-ribose 1-diphosphate binding site.

The protein belongs to the UPRTase family. Mg(2+) serves as cofactor.

The enzyme catalyses UMP + diphosphate = 5-phospho-alpha-D-ribose 1-diphosphate + uracil. Its pathway is pyrimidine metabolism; UMP biosynthesis via salvage pathway; UMP from uracil: step 1/1. Allosterically activated by GTP. Functionally, catalyzes the conversion of uracil and 5-phospho-alpha-D-ribose 1-diphosphate (PRPP) to UMP and diphosphate. The polypeptide is Uracil phosphoribosyltransferase (uprt) (Dictyostelium discoideum (Social amoeba)).